We begin with the raw amino-acid sequence, 1341 residues long: MMNRTTPDQELAPASEPVWERPWSVEEIRRSSQSWSLAADAGLLQFLQEFSQQTISRTHEIKKQVDGLIRETKATDCRLHNVFNDFLMLSNTQFIENRVYDEEVEEPVLKAEAEKTEQEKTREQKEVDLIPKVQEAVNYGLQVLDSAFEQLDIKAGNSDSEEDDANGRVELILEPKDLYIDRPLPYLIGSKLFMEQEDVGLGELSSEEGSVGSDRGSIVDTEEEKEEEESDEDFAHHSDNEQNRHTTQMSDEEEDDDGCDLFADSEKEEEDIEDIEENTRPKRSRPTSFADELAARIKGDAVGRVDEEPTTLPSGEAKPRKTLKEKKERRTPSDDEEDNLFAPPKLTDEDFSPFGSGGGLFSGGKGLFDDEDEESDLFTEAPQDRQAGASVKEESSSSKPGKKIPAGAVSVFLGDTDVFGAASVPSMKEPQKPEQPTPRKSPYGPPPTGLFDDDDGDDDDDFFSAPHSKPSKTGKVQSTADIFGDEEGDLFKEKAVASPEATVSQTDENKARAEKKVTLSSSKNLKPSSETKTQKGLFSDEEDSEDLFSSQSASKLKGASLLPGKLPTLVSLFDDEDEEDNLFGGTAAKKQTLCLQAQREEKAKASELSKKKASALLFSSDEEDQWNIPASQTHLASDSRSKGEPRDSGTLQSQEAKAVKKTSLFEEDEEDDLFAIAKDSQKKTQRVSLLFEDDVDSGGSLFGSPPTSVPPATKKKETVSEAPPLLFSDEEEKEAQLGVKSVDKKVESAKESLKFGRTDVAESEKEGLLTRSAQETVKHSDLFSSSSPWDKGTKPRTKTVLSLFDEEEDKMEDQNIIQAPQKEVGKGRDPDAHPKSTGVFQDEELLFSHKLQKDNDPDVDLFAGTKKTKLLEPSVGSLFGDDEDDDLFSSAKSQPLVQEKKRVVKKDHSVDSFKNQKHPESIQGSKEKGIWKPETPQDSSGLAPFKTKEPSTRIGKIQANLAINPAALLPTAASQISEVKPVLPELAFPSSEHRRSHGLESVPVLPGSGEAGVSFDLPAQADTLHSANKSRVKMRGKRRPQTRAARRLAAQESSETEDMSVPRGPIAQWADGAISPNGHRPQLRAASGEDSTEEALAAAAAPWEGGPVPGVDRSPFAKSLGHSRGEADLFDSGDIFSTGTGSQSVERTKPKAKIAENPANPPVGGKAKSPMFPALGEASSDDDLFQSAKPKPAKKTNPFPLLEDEDDLFTDQKVKKNETKSNSQQDVILTTQDIFEDDIFATEAIKPSQKTREKEKTLESNLFDDNIDIFADLTVKPKEKSKKKVEAKSIFDDDMDDIFSSGIQAKTTKPKSRSAQAAPEPRFEHKVSNIFDDPLNAFGGQ.

Residues 1–220 (MMNRTTPDQE…VGSDRGSIVD (220 aa)) form a sufficient for interaction with WASHC3, WASHC4 and WASHC5; required for interaction with WASHC1 region. A compositionally biased stretch (low complexity) spans 202–214 (GELSSEEGSVGSD). Residues 202–405 (GELSSEEGSV…SSSKPGKKIP (204 aa)) are disordered. Residues 220–232 (DTEEEKEEEESDE) are compositionally biased toward acidic residues. Residues 233–244 (DFAHHSDNEQNR) are compositionally biased toward basic and acidic residues. 2 stretches are compositionally biased toward acidic residues: residues 250-259 (SDEEEDDDGC) and 266-276 (EKEEEDIEDIE). The segment covering 293-307 (LAARIKGDAVGRVDE) has biased composition (basic and acidic residues). Residues 355 to 366 (GSGGGLFSGGKG) show a composition bias toward gly residues. A sufficient for interaction with CCDC93 region spans residues 356 to 600 (SGGGLFSGGK…QTLCLQAQRE (245 aa)). The segment at 356–742 (SGGGLFSGGK…KEAQLGVKSV (387 aa)) is required for interaction with CCDC22 and VPS35L. Positions 357-1341 (GGGLFSGGKG…DDPLNAFGGQ (985 aa)) are interaction with VPS35. 4 short sequence motifs (LFa) span residues 367–378 (LFDDEDEESDLF), 411–419 (VFLGDTDVF), 450–463 (LFDD…DDFF), and 482–491 (IFGDEEGDLF). The interval 422 to 554 (ASVPSMKEPQ…EDLFSSQSAS (133 aa)) is disordered. Acidic residues predominate over residues 451-462 (FDDDDGDDDDDF). Basic and acidic residues predominate over residues 507–517 (DENKARAEKKV). Polar residues predominate over residues 518–536 (TLSSSKNLKPSSETKTQKG). Short sequence motifs (LFa) lie at residues 537–548 (LFSDEEDSEDLF), 572–583 (LFDDEDEEDNLF), and 617–629 (LFSS…WNIP). Ser-539 carries the post-translational modification Phosphoserine. Disordered regions lie at residues 621–664 (DEED…KTSL), 696–739 (DSGG…QLGV), and 751–838 (ESLK…KSTG). Over residues 637 to 647 (SDSRSKGEPRD) the composition is skewed to basic and acidic residues. 3 consecutive short sequence motifs (LFa) follow at residues 664-674 (LFEEDEEDDLF), 690-702 (LFED…GSLF), and 726-738 (LFSD…AQLG). The segment covering 751–768 (ESLKFGRTDVAESEKEGL) has biased composition (basic and acidic residues). The short motif at 803-817 (LFDEEEDKMEDQNII) is the LFa 11 element. Residues 823-834 (EVGKGRDPDAHP) show a composition bias toward basic and acidic residues. 3 consecutive short sequence motifs (LFa) follow at residues 839-847 (VFQDEELLF), 856-862 (DPDVDLF), and 878-888 (LFGDDEDDDLF). Disordered stretches follow at residues 881–951 (DDED…KEPS) and 988–1205 (FPSS…LEDE). Composition is skewed to basic and acidic residues over residues 898 to 911 (QEKK…HSVD) and 917 to 931 (KHPE…KGIW). The interaction with phospholipids stretch occupies residues 937 to 1341 (QDSSGLAPFK…DDPLNAFGGQ (405 aa)). Residues 1028–1046 (NKSRVKMRGKRRPQTRAAR) are compositionally biased toward basic residues. A required for interaction with F-actin-capping protein subunit alpha (CAPZA1 or CAPZA2 or CAPZA3) region spans residues 1029–1047 (KSRVKMRGKRRPQTRAARR). A phosphoserine mark is found at Ser-1054 and Ser-1087. A compositionally biased stretch (low complexity) spans 1094 to 1110 (EALAAAAAPWEGGPVPG). Position 1114 is a phosphoserine (Ser-1114). Short sequence motifs (LFa) lie at residues 1129–1136 (LFDSGDIF), 1171–1185 (MFPA…DDLF), 1201–1209 (LLEDEDDLF), 1234–1240 (IFEDDIF), 1262–1270 (LFDDNIDIF), and 1290–1299 (IFDDDMDDIF). The span at 1135-1145 (IFSTGTGSQSV) shows a compositional bias: polar residues. The tract at residues 1302–1326 (GIQAKTTKPKSRSAQAAPEPRFEHK) is disordered. Positions 1330-1338 (IFDDPLNAF) match the LFa 21 motif.

This sequence belongs to the FAM21 family. As to quaternary structure, component of the WASH core complex also described as WASH regulatory complex (SHRC) composed of WASH (WASHC1, WASH2P or WASH3P), WASHC2 (WASHC2A or WASHC2C), WASHC3, WASHC4 and WASHC5; in the complex interacts (via N-terminus) directly with WASHC1. The WASH core complex associates with the F-actin-capping protein dimer (formed by CAPZA1, CAPZA2 or CAPZA3 and CAPZB) in a transient or substoichiometric manner which was initially described as WASH complex. Interacts with VPS35; mediates the association with the retromer CSC complex. Interacts with FKBP15. Interacts with CCDC93, CCDC22, VPS35L; indicative for an association of the WASH core complex with the CCC and retriever complexes. Directly interacts with TBC1D23.

The protein localises to the early endosome membrane. It localises to the cell membrane. Its function is as follows. Acts at least in part as component of the WASH core complex whose assembly at the surface of endosomes inhibits WASH nucleation-promoting factor (NPF) activity in recruiting and activating the Arp2/3 complex to induce actin polymerization and is involved in the fission of tubules that serve as transport intermediates during endosome sorting. Mediates the recruitment of the WASH core complex to endosome membranes via binding to phospholipids and VPS35 of the retromer CSC. Mediates the recruitment of the F-actin-capping protein dimer to the WASH core complex probably promoting localized F-actin polymerization needed for vesicle scission. Via its C-terminus binds various phospholipids, most strongly phosphatidylinositol 4-phosphate (PtdIns-(4)P), phosphatidylinositol 5-phosphate (PtdIns-(5)P) and phosphatidylinositol 3,5-bisphosphate (PtdIns-(3,5)P2). Involved in the endosome-to-plasma membrane trafficking and recycling of SNX27-retromer-dependent cargo proteins, such as GLUT1. Required for the association of DNAJC13, ENTR1, ANKRD50 with retromer CSC subunit VPS35. Required for the endosomal recruitment of CCC complex subunits COMMD1 and CCDC93 as well as the retriever complex subunit VPS35L. This is WASH complex subunit 2A from Homo sapiens (Human).